Reading from the N-terminus, the 488-residue chain is Malonate-semialdehyde dehydrogenase (488 aa).

The NAD(+) site is built by A150, F152, K176, E179, R180, S229, and T251. Catalysis depends on C284, which acts as the Nucleophile. Residue E382 participates in NAD(+) binding.

Belongs to the aldehyde dehydrogenase family. IolA subfamily. In terms of assembly, homotetramer.

The enzyme catalyses 3-oxopropanoate + NAD(+) + CoA + H2O = hydrogencarbonate + acetyl-CoA + NADH + H(+). It carries out the reaction 2-methyl-3-oxopropanoate + NAD(+) + CoA + H2O = propanoyl-CoA + hydrogencarbonate + NADH + H(+). It functions in the pathway polyol metabolism; myo-inositol degradation into acetyl-CoA; acetyl-CoA from myo-inositol: step 7/7. Catalyzes the oxidation of malonate semialdehyde (MSA) and methylmalonate semialdehyde (MMSA) into acetyl-CoA and propanoyl-CoA, respectively. Is involved in a myo-inositol catabolic pathway. Bicarbonate, and not CO2, is the end-product of the enzymatic reaction. The sequence is that of Malonate-semialdehyde dehydrogenase from Listeria monocytogenes serovar 1/2a (strain ATCC BAA-679 / EGD-e).